Consider the following 41-residue polypeptide: MKIKNSLKALKARHRDNRLVRRKGRVYIINKQNPRFKARQG.

This sequence belongs to the bacterial ribosomal protein bL36 family.

The protein is Large ribosomal subunit protein bL36 (rpmJ) of Agrobacterium fabrum (strain C58 / ATCC 33970) (Agrobacterium tumefaciens (strain C58)).